The chain runs to 406 residues: Putative cfxQ-like protein R730 (406 aa).

A disordered region spans residues 1–37 (MKRSHDSITRSINSDNDSETNMNSDNNNNNKPNQRKK). A compositionally biased stretch (low complexity) spans 13–32 (NSDNDSETNMNSDNNNNNKP). 173–180 (GPPGVGKS) contacts ATP.

Belongs to the CbxX/CfxQ family.

The polypeptide is Putative cfxQ-like protein R730 (Acanthamoeba polyphaga mimivirus (APMV)).